The following is a 13477-amino-acid chain: Mucin-3B (13477 aa).

Residues 1-21 (MQLLGLLSILWMLKSSPGATG) form the signal peptide. Low complexity predominate over residues 219–234 (TISSTTRTTERTPLPT). 106 disordered regions span residues 219 to 243 (TISS…TMSP), 327 to 347 (TRST…TVTD), 360 to 383 (GTLS…TPMT), 513 to 559 (SMTT…PSTL), 622 to 643 (ATTP…STPS), 815 to 839 (TTTN…TGTG), 923 to 968 (TSQT…STTE), 1154 to 1179 (PSMS…TSTL), 1480 to 1511 (SPTV…STEN), 1529 to 1601 (SISA…FPET), 1619 to 1638 (MTST…VTSM), 1692 to 1714 (TTST…TDSM), 1944 to 1968 (TTSA…TFTS), 2064 to 2123 (TPNA…IAKS), 2170 to 2197 (STSM…SGGI), 2275 to 2308 (SSSM…AEST), 2442 to 2462 (RSTP…VKGS), 2476 to 2497 (LSME…TATT), 2509 to 2537 (SHST…GPPT), 2591 to 2610 (SAMS…TETS), 2672 to 2717 (TSTL…FSSS), 2812 to 2832 (TTIT…STST), 2845 to 2867 (TMTE…STTE), 2922 to 2947 (SRIP…SVGI), 3074 to 3109 (ETPS…TPDI), 3309 to 3395 (TTSH…NSNS), 3420 to 3481 (ITTT…SHST), 3545 to 3565 (STTS…STPS), 3654 to 3727 (SITT…STTA), 3740 to 3812 (ITTI…TTAE), 4014 to 4047 (TETT…SIAT), 4067 to 4106 (TSNS…HSTP), 4182 to 4249 (TTET…SSIT), 4269 to 4313 (NSTS…PSFT), 4510 to 4530 (SHST…SHST), 4557 to 4617 (TETT…STSS), 4630 to 4651 (YSPS…STPS), 4802 to 4830 (TSSF…TATG), 4953 to 4986 (HSLP…KTIS), 5128 to 5203 (YTSS…ITTT), 5455 to 5486 (ITNT…PSFT), 5627 to 5680 (TTKT…ATSK), 5834 to 5908 (TTSY…HSPP), 5957 to 5977 (STPS…SSPS), 5990 to 6017 (HSTA…SSIT), 6030 to 6080 (TSSI…PPIF), 6120 to 6150 (TTET…SFTS), 6172 to 6197 (TEST…HTPP), 6456 to 6481 (TETP…HSTP), 6541 to 6598 (TKTT…TSTS), 6846 to 6867 (TTGT…TKTT), 6946 to 6971 (ITTT…RTSH), 6999 to 7021 (TTES…ETRS), 7067 to 7093 (TTET…HSPP), 7170 to 7206 (TETA…TTGI), 7225 to 7244 (SHST…ISHS), 7299 to 7329 (FTSS…TSHS), 7400 to 7433 (SYTS…HRTP), 7476 to 7532 (TETI…TTST), 7578 to 7600 (TGTS…TTSH), 7731 to 7766 (TEIT…ATSK), 7922 to 7996 (SHST…PPIF), 8036 to 8066 (TTET…SFTS), 8088 to 8113 (TEST…HTPP), 8372 to 8397 (TETP…HSTP), 8457 to 8514 (TKTT…TSTS), 8762 to 8783 (TTGT…TKTT), 8862 to 8887 (ITTT…RTSH), 8915 to 8941 (TTES…HSPP), 8983 to 9009 (TTET…HSPP), 9052 to 9122 (AETT…TTGI), 9141 to 9160 (SHST…ISHS), 9215 to 9240 (FTSS…TSTE), 9335 to 9366 (TSSI…HRTP), 9409 to 9465 (TETI…TTST), 9566 to 9589 (SHST…NPSL), 9612 to 9674 (TTET…PPSF), 9734 to 9760 (TTSH…SSFT), 9828 to 9859 (TSSI…HSTP), 9883 to 9908 (TTTE…RSHS), 9921 to 9973 (TTSH…SKTI), 10076 to 10099 (SDST…SPSF), 10120 to 10166 (ITTT…TVPS), 10189 to 10285 (ITTE…SPLS), 10389 to 10425 (TSSI…LSSA), 10462 to 10481 (TTKT…TSTK), 10501 to 10537 (SHSS…TSTS), 10640 to 10660 (TTSF…TPSF), 10750 to 10828 (TTTE…QRSP), 10887 to 11032 (TTET…SPSS), 11044 to 11065 (SHST…HSTP), 11276 to 11317 (TGTE…SPSH), 11446 to 11482 (STTA…ITTT), 11566 to 11697 (TTET…PGFS), 11754 to 11779 (TKTT…HSTP), 11818 to 11949 (SIAT…HSPP), 12067 to 12103 (TSSF…STPV), 12186 to 12220 (PSYT…HSTP), 12280 to 12323 (TETT…STPI), 12364 to 12452 (TTET…TTET), 12468 to 12578 (EMTS…NTPS), 12616 to 12639 (FTTA…DIPT), 12681 to 12700 (SSPS…TSPT), 12785 to 12805 (IPST…LQTS), 12985 to 13011 (TSSM…TVPT), and 13052 to 13086 (SLPT…TPTT). 2 stretches are compositionally biased toward low complexity: residues 513 to 538 (SMTT…LSST) and 547 to 559 (TSHT…PSTL). Residues 1620–1638 (TSTPPITSSVTPTNTVTSM) show a composition bias toward low complexity. The segment covering 1944–1956 (TTSATMEPPSSSV) has biased composition (polar residues). Over residues 1957 to 1968 (AATDTGQTTFTS) the composition is skewed to low complexity. Over residues 2066-2091 (NASSMTTSETTYPNSPTGPVTNSMSK) the composition is skewed to polar residues. The span at 2096–2107 (ASMTQTSSTATS) shows a compositional bias: low complexity. The span at 2113–2123 (PSGSTTEIAKS) shows a compositional bias: polar residues. The span at 2170-2185 (STSMTPSTVSTSIPTS) shows a compositional bias: low complexity. Positions 2186 to 2195 (QPKTVNSSSG) are enriched in polar residues. Composition is skewed to low complexity over residues 2292–2308 (SSPP…AEST) and 2442–2458 (RSTP…PTST). The span at 2591 to 2603 (SAMSTSDIPSSPS) shows a compositional bias: low complexity. Composition is skewed to low complexity over residues 2929-2944 (STDI…TPSS) and 3074-3097 (ETPS…TATS). The span at 3098–3109 (PETNTLTPTPDI) shows a compositional bias: polar residues. The span at 3309–3359 (TTSHSTPSFTSPIATTKTSSHSSPSFTSSIATLETTSHSTPSFTSSITTNS) shows a compositional bias: low complexity. Polar residues predominate over residues 3360-3370 (HSTPRFSSSIA). Residues 3371–3385 (TRETTSHSTSSFTPS) show a composition bias toward low complexity. Residues 3386–3395 (IATTKTNSNS) are compositionally biased toward polar residues. Positions 3420-3452 (ITTTETTSHSTPSFTSSMATTKTTSHSTPSFTS) are enriched in low complexity. Polar residues predominate over residues 3453-3462 (PIATRETTSH). The segment covering 3463–3481 (STPSFTSLITTTKTTSHST) has biased composition (low complexity). Polar residues predominate over residues 3740 to 3749 (ITTIETPSHG). Low complexity predominate over residues 3750-3785 (TPSFTSSITSTETTSHSSPSFISSITTTEITSHSTP). Residues 3786 to 3812 (RFTSSITTMETPSHSTPNFTSSITTAE) are compositionally biased toward polar residues. 2 stretches are compositionally biased toward low complexity: residues 4020 to 4042 (STPS…PSFT) and 4067 to 4096 (TSNS…SSMT). Over residues 4097–4106 (ATETTSHSTP) the composition is skewed to polar residues. 2 stretches are compositionally biased toward low complexity: residues 4182–4228 (TTET…PSFT) and 4237–4249 (TSHS…SSIT). Low complexity predominate over residues 4557-4574 (TETTSNSSPSFTSSITNT). Positions 4575–4601 (KTTSYSPPGFTSSIPATETTSRSPPGF) are enriched in polar residues. Residues 4602–4617 (TSSITTTETTSHSTSS) show a composition bias toward low complexity. Over residues 4802–4827 (TSSFTSSITSTETTSHSTPSLTSSIT) the composition is skewed to low complexity. The span at 5137 to 5158 (TPSHITPSFTSTITTSESTSHS) shows a compositional bias: low complexity. Polar residues predominate over residues 5159-5170 (NPSLTSAITTTE). 2 stretches are compositionally biased toward low complexity: residues 5174 to 5203 (HSPP…ITTT) and 5458 to 5486 (TEST…PSFT). Over residues 5834-5858 (TTSYSTPSITSSITTTERTSHSTPS) the composition is skewed to low complexity. Positions 5859–5874 (YTSSIATRETPSHTVP) are enriched in polar residues. The segment covering 5875–5889 (SFTSSITTTESTSHS) has biased composition (low complexity). A compositionally biased stretch (polar residues) spans 5890–5901 (NPSLTSAITTTE). A compositionally biased stretch (low complexity) spans 6045–6059 (SFTSSITTTDSTSHS). Over residues 6060–6071 (NPSLTSAITTTE) the composition is skewed to polar residues. Residues 6172-6185 (TESTSHSTPSFTSS) show a composition bias toward low complexity. Residues 6186–6197 (IATTETTSHTPP) show a composition bias toward polar residues. Over residues 6456–6475 (TETPSHSTPSFPSSITTTQS) the composition is skewed to low complexity. The span at 6852–6867 (HNTLGLSSSVDTTKTT) shows a compositional bias: polar residues. Low complexity predominate over residues 6946 to 6965 (ITTTETTSHSTPSITSSVTT). The segment covering 6999-7018 (TTESTSHSNPSLTSAITTTE) has biased composition (polar residues). Residues 7172-7206 (TASHSNPSSTSSITTTESTSHSPPRSTSAIATTGI) are compositionally biased toward low complexity. 2 stretches are compositionally biased toward low complexity: residues 7300-7329 (TSSI…TSHS) and 7400-7427 (SYTS…STET). Residues 7476-7491 (TETISHSPPSFTSLTN) show a composition bias toward polar residues. Over residues 7492–7532 (STETTSHSPPSFTSSSTTTETPSHSTPGFSSSIATSKTTST) the composition is skewed to low complexity. Low complexity-rich tracts occupy residues 7734 to 7766 (TSHS…ATSK) and 7922 to 7944 (SHST…STPS). Over residues 7945–7987 (YTSSIATSETPSHTVPSFTSLITTTDSTSHSNPSLTSAITTTE) the composition is skewed to polar residues. Positions 8088–8101 (TESTSHSTPSFTSS) are enriched in low complexity. Polar residues predominate over residues 8102 to 8113 (IATTETTSHTPP). The segment covering 8372–8391 (TETPSHSTPSFPSSITTTQS) has biased composition (low complexity). The span at 8768 to 8783 (HNTLGLSSSVDTTKTT) shows a compositional bias: polar residues. Low complexity predominate over residues 8862-8881 (ITTTETTSHSTPSITSSVTT). The span at 8915–8934 (TTESTSHSNPSLTSAITTTE) shows a compositional bias: polar residues. Low complexity-rich tracts occupy residues 9067–9081 (PTTE…SFTS) and 9088–9122 (TASH…TTGI). A compositionally biased stretch (low complexity) spans 9335–9360 (TSSITTTETPSHSSPSFPSSITSTET). The span at 9409–9424 (TETISHSPPSFTSLTN) shows a compositional bias: polar residues. Low complexity-rich tracts occupy residues 9425–9465 (STET…TTST), 9566–9585 (SHST…TSHS), and 9612–9624 (TTET…PSFT). Polar residues predominate over residues 9625 to 9661 (SSIATAETTSHSPPSFTSLITTSETPSHSNPSFTSLI). Over residues 9662-9674 (TTTESTSHSPPSF) the composition is skewed to low complexity. Composition is skewed to polar residues over residues 9892–9903 (NPSLTSAITNTE) and 9921–9933 (TTSH…TSLI). Over residues 9934-9973 (TSTETTSHSPPSFTSSSTTTETPSHSTPGFSSSIATSKTI) the composition is skewed to low complexity. A compositionally biased stretch (low complexity) spans 10120-10130 (ITTTETTSHST). Over residues 10131-10166 (PNITSSVTTTERTSHSTPSYTSSIATGETPSHTVPS) the composition is skewed to polar residues. Low complexity-rich tracts occupy residues 10196 to 10271 (HSPP…SFTS) and 10394 to 10421 (TSET…STPS). The segment covering 10750-10791 (TTTETTSHSPPRFTSSITTTKTPSDSTPVFTPSIATSETSSH) has biased composition (polar residues). 3 stretches are compositionally biased toward low complexity: residues 10792–10828 (STPG…QRSP), 10887–10937 (TTET…SSIT), and 10950–11032 (PSSI…SPSS). Positions 11278 to 11291 (TETTSHSPPHFTSS) are enriched in low complexity. Positions 11292 to 11317 (ITRTKTTSHRPPTFTSSITTTESPSH) are enriched in polar residues. A compositionally biased stretch (low complexity) spans 11566–11682 (TTETTSHSIP…SHSTSGFTSS (117 aa)). Polar residues-rich tracts occupy residues 11683-11697 (NATT…PGFS) and 11754-11769 (TKTT…SSIA). Low complexity-rich tracts occupy residues 11770 to 11779 (STKTTSHSTP) and 11818 to 11880 (SIAT…SHST). 2 stretches are compositionally biased toward polar residues: residues 11881-11896 (PSFT…TSHS) and 11903-11912 (LIPTTKTTLH). 2 stretches are compositionally biased toward low complexity: residues 11913 to 11949 (SPPS…HSPP) and 12067 to 12091 (TSSF…TSSI). Residues 12092-12103 (AVTETPSDSTPV) are compositionally biased toward polar residues. The segment covering 12280-12309 (TETTSHSAPNFSSSITSTETTSHSTPSFTS) has biased composition (low complexity). The segment covering 12310–12323 (AITSTETTSHSTPI) has biased composition (polar residues). Over residues 12364-12412 (TTETTSHSTPGFASSITTTKTTSHSTPSFTSSIATSNTTSSSTPGFTSS) the composition is skewed to low complexity. Residues 12413 to 12439 (IATTETTSRSTPGFTSSIVTTETTSPH) are compositionally biased toward polar residues. Over residues 12440–12452 (TPGFTSSITTTET) the composition is skewed to low complexity. Positions 12468–12477 (EMTSHSTPSL) are enriched in polar residues. Low complexity-rich tracts occupy residues 12478–12569 (TFSI…VTTP), 12624–12639 (TSTP…DIPT), 12681–12692 (SSPSIQSTETSS), 12794–12805 (QTTPSIPSLQTS), 12990–13003 (PESE…ASSS), and 13073–13086 (TSET…TPTT). The EGF-like domain occupies 13130 to 13163 (SGDRCQLQTRCQNGGQWDGLKCQCPSTFYGSSCE). 2 cysteine pairs are disulfide-bonded: cysteine 13134/cysteine 13140 and cysteine 13153/cysteine 13162. The 126-residue stretch at 13172–13297 (DVVETEVGME…DSIKVNNNSK (126 aa)) folds into the SEA domain. Residues 13381–13401 (LVGGLTAGAALLVLLLLALGV) traverse the membrane as a helical segment.

Highly O-glycosylated and probably also N-glycosylated. As to expression, fetal and adult small intestine and fetal and adult colon.

The protein resides in the membrane. In terms of biological role, major glycoprotein component of a variety of mucus gels. Thought to provide a protective, lubricating barrier against particles and infectious agents at mucosal surfaces. This chain is Mucin-3B, found in Homo sapiens (Human).